The primary structure comprises 220 residues: Protein Syd (220 aa).

The protein belongs to the Syd family.

Its subcellular location is the cell inner membrane. Its function is as follows. Interacts with the SecY protein in vivo. May bind preferentially to an uncomplexed state of SecY, thus functioning either as a chelating agent for excess SecY in the cell or as a regulatory factor that negatively controls the translocase function. The chain is Protein Syd from Shewanella loihica (strain ATCC BAA-1088 / PV-4).